Here is a 264-residue protein sequence, read N- to C-terminus: DNA-directed RNA polymerase subunit Rpo3 (264 aa).

The [3Fe-4S] cluster site is built by Cys-203, Cys-206, and Cys-209.

It belongs to the archaeal Rpo3/eukaryotic RPB3 RNA polymerase subunit family. As to quaternary structure, part of the RNA polymerase complex. [3Fe-4S] cluster is required as a cofactor.

The protein resides in the cytoplasm. It catalyses the reaction RNA(n) + a ribonucleoside 5'-triphosphate = RNA(n+1) + diphosphate. DNA-dependent RNA polymerase (RNAP) catalyzes the transcription of DNA into RNA using the four ribonucleoside triphosphates as substrates. This chain is DNA-directed RNA polymerase subunit Rpo3, found in Methanothermobacter thermautotrophicus (strain ATCC 29096 / DSM 1053 / JCM 10044 / NBRC 100330 / Delta H) (Methanobacterium thermoautotrophicum).